Consider the following 56-residue polypeptide: UPF0391 membrane protein Jann_3570 (56 aa).

The next 2 membrane-spanning stretches (helical) occupy residues 4–24 (WAVT…GGIA) and 29–48 (GIAQ…SLVA).

The protein belongs to the UPF0391 family.

It is found in the cell membrane. The chain is UPF0391 membrane protein Jann_3570 from Jannaschia sp. (strain CCS1).